A 290-amino-acid polypeptide reads, in one-letter code: Bifunctional protein FolD (290 aa).

NADP(+) is bound by residues 167-169 (GRS), Ser192, and Ile233.

It belongs to the tetrahydrofolate dehydrogenase/cyclohydrolase family. Homodimer.

It catalyses the reaction (6R)-5,10-methylene-5,6,7,8-tetrahydrofolate + NADP(+) = (6R)-5,10-methenyltetrahydrofolate + NADPH. The enzyme catalyses (6R)-5,10-methenyltetrahydrofolate + H2O = (6R)-10-formyltetrahydrofolate + H(+). The protein operates within one-carbon metabolism; tetrahydrofolate interconversion. Its function is as follows. Catalyzes the oxidation of 5,10-methylenetetrahydrofolate to 5,10-methenyltetrahydrofolate and then the hydrolysis of 5,10-methenyltetrahydrofolate to 10-formyltetrahydrofolate. This chain is Bifunctional protein FolD, found in Azorhizobium caulinodans (strain ATCC 43989 / DSM 5975 / JCM 20966 / LMG 6465 / NBRC 14845 / NCIMB 13405 / ORS 571).